The following is a 539-amino-acid chain: O-phosphoserine--tRNA(Cys) ligase (539 aa).

Residues 188-190, 233-235, 275-276, and asparagine 327 contribute to the substrate site; these read HMT, SAS, and YY.

It belongs to the class-II aminoacyl-tRNA synthetase family. O-phosphoseryl-tRNA(Cys) synthetase subfamily. Homotetramer. Interacts with SepCysS.

The catalysed reaction is tRNA(Cys) + O-phospho-L-serine + ATP = O-phospho-L-seryl-tRNA(Cys) + AMP + diphosphate. In terms of biological role, catalyzes the attachment of O-phosphoserine (Sep) to tRNA(Cys). This Methanococcoides burtonii (strain DSM 6242 / NBRC 107633 / OCM 468 / ACE-M) protein is O-phosphoserine--tRNA(Cys) ligase.